We begin with the raw amino-acid sequence, 631 residues long: BTB/POZ domain-containing protein At1g67900 (631 aa).

The region spanning 28-93 (SDFTIEVSGS…CYGITITISA (66 aa)) is the BTB domain. One can recognise an NPH3 domain in the interval 200–509 (GWWAEDIAEL…VQVLFYEQAR (310 aa)). Residues 361-399 (QTSPPTSPLRGKKGMMDRRRRSRSAENIDLEFQESRRSS) form a disordered region. Basic residues predominate over residues 370–382 (RGKKGMMDRRRRS). The residue at position 450 (Tyr450) is a Phosphotyrosine. Position 567 is a phosphoserine (Ser567).

Belongs to the NPH3 family.

Its pathway is protein modification; protein ubiquitination. In terms of biological role, may act as a substrate-specific adapter of an E3 ubiquitin-protein ligase complex (CUL3-RBX1-BTB) which mediates the ubiquitination and subsequent proteasomal degradation of target proteins. In Arabidopsis thaliana (Mouse-ear cress), this protein is BTB/POZ domain-containing protein At1g67900.